Reading from the N-terminus, the 350-residue chain is Geranylgeranyl pyrophosphate synthase (350 aa).

Residues Lys66, Arg69, and His98 each contribute to the isopentenyl diphosphate site. The Mg(2+) site is built by Asp105 and Asp109. Arg114 provides a ligand contact to dimethylallyl diphosphate. Position 115 (Arg115) interacts with isopentenyl diphosphate. 5 residues coordinate dimethylallyl diphosphate: Lys200, Thr201, Gln236, Asn243, and Lys263.

The protein belongs to the FPP/GGPP synthase family. Mg(2+) is required as a cofactor.

The enzyme catalyses isopentenyl diphosphate + dimethylallyl diphosphate = (2E)-geranyl diphosphate + diphosphate. It catalyses the reaction isopentenyl diphosphate + (2E)-geranyl diphosphate = (2E,6E)-farnesyl diphosphate + diphosphate. It carries out the reaction isopentenyl diphosphate + (2E,6E)-farnesyl diphosphate = (2E,6E,10E)-geranylgeranyl diphosphate + diphosphate. Its pathway is secondary metabolite biosynthesis; terpenoid biosynthesis. In terms of biological role, geranylgeranyl pyrophosphate synthase; part of the gene cluster that mediates the biosynthesis of pleuromutilin, a tricyclic diterpene showing antibacterial properties. The geranylgeranyl diphosphate (GGPP) synthase ple4 catalyzes the first step in pleuromutilin biosynthesis. GGPP is then substrate of the premutilin synthase (PS) ple3 to yield premutilin. Premutilin synthase is a bifunctional enzyme composed of the fusion of a class II diterpene cyclase (DTC) and a class I diterpene synthase (DTS), with the corresponding domains and active sites containing characteristic aspartate-rich motifs. GGPP is first converted to mutildienyl-diphosphate (MPP) at the class II DTC site. MPP is subsequently further cyclized at the class I DTS site, followed by a 1,5-hydride shift and addition of water prior to terminating deprotonation, to yield premutilin. The cytochrome P450 monooxygenases ple5 and ple6 hydroxylate premutilin at C-11 and C-3, respectively, producing 11-hydroxypremutilin and 3-hydroxypremutilin. The combination of the actions of both ple5 and ple6 leads to the production of 3,11-dihydroxypremutilin. The short chain dehydrogenase ple7 further converts 3,11-dihydroxypremutilin into mutilin. The acetyltransferase ple2 then acetylates mutilin to produce 14-O-acetylmutilin. Finally, the cytochrome P450 monooxygenase ple1 catalyzes hydroxylation on the alpha position of the acetyl side chain of 14-O-acetylmutilin to yield pleuromutilin. This Rhodocybe pseudopiperita (Clitopilus pseudopiperitus) protein is Geranylgeranyl pyrophosphate synthase.